A 406-amino-acid chain; its full sequence is MARAFLFVLDSFGVGGAPDAAAYGDEGADTLGHIAEFCAAGAGDRAGLRDGPLSLPNLSELGLMQIARSASGRFPAGMPIPEKVYGIYGAATEISRGKDTPSGHWEIAGTPVSFDWGYFPTEGDAFPEELIEALCRDAGVSGILGNCHASGTEIIARLGEEHIRTGKPICYTSSDSVFQVAAHEVHFGLDRLLAFCQVARGLLDRYNIGRVIARPFIGHSSSTFQRTGNRRDFSVLPPEPTLLDRLIEHGRHVHAVGKIGDIFAHQGISRLIKANGNEALMDATLATIDEAEDGDLVFTNFVDFDMVYGHRRDVPGYAAALEAFDARLAEVHKKLKPGDLVVLTADHGCDPTWRGTDHTRERVPVIAYGPGIRSRSIGVRRSYADIGESIARHLGIPAGPHGRSFL.

Residues Asp-10, Asp-305, His-310, Asp-346, His-347, and His-358 each coordinate Mn(2+).

The protein belongs to the phosphopentomutase family. It depends on Mn(2+) as a cofactor.

It is found in the cytoplasm. It carries out the reaction 2-deoxy-alpha-D-ribose 1-phosphate = 2-deoxy-D-ribose 5-phosphate. It catalyses the reaction alpha-D-ribose 1-phosphate = D-ribose 5-phosphate. It participates in carbohydrate degradation; 2-deoxy-D-ribose 1-phosphate degradation; D-glyceraldehyde 3-phosphate and acetaldehyde from 2-deoxy-alpha-D-ribose 1-phosphate: step 1/2. In terms of biological role, isomerase that catalyzes the conversion of deoxy-ribose 1-phosphate (dRib-1-P) and ribose 1-phosphate (Rib-1-P) to deoxy-ribose 5-phosphate (dRib-5-P) and ribose 5-phosphate (Rib-5-P), respectively. In Rhizobium leguminosarum bv. trifolii (strain WSM2304), this protein is Phosphopentomutase.